A 145-amino-acid chain; its full sequence is S-adenosylmethionine synthase 2 (145 aa).

ATP is bound by residues 6–7 (RK), alanine 23, lysine 27, and lysine 31. Residue lysine 31 coordinates L-methionine.

The protein belongs to the AdoMet synthase family. Homotetramer. Mn(2+) serves as cofactor. It depends on Mg(2+) as a cofactor. Requires Co(2+) as cofactor. The cofactor is K(+). In terms of tissue distribution, mainly in floral buds and roots.

The protein localises to the cytoplasm. It catalyses the reaction L-methionine + ATP + H2O = S-adenosyl-L-methionine + phosphate + diphosphate. The protein operates within amino-acid biosynthesis; S-adenosyl-L-methionine biosynthesis; S-adenosyl-L-methionine from L-methionine: step 1/1. In terms of biological role, catalyzes the formation of S-adenosylmethionine from methionine and ATP. The reaction comprises two steps that are both catalyzed by the same enzyme: formation of S-adenosylmethionine (AdoMet) and triphosphate, and subsequent hydrolysis of the triphosphate. In Petroselinum crispum (Parsley), this protein is S-adenosylmethionine synthase 2 (SMS-2).